Consider the following 213-residue polypeptide: Uridine kinase (213 aa).

14–21 (GASASGKS) lines the ATP pocket.

The protein belongs to the uridine kinase family.

The protein resides in the cytoplasm. The enzyme catalyses uridine + ATP = UMP + ADP + H(+). It catalyses the reaction cytidine + ATP = CMP + ADP + H(+). Its pathway is pyrimidine metabolism; CTP biosynthesis via salvage pathway; CTP from cytidine: step 1/3. It functions in the pathway pyrimidine metabolism; UMP biosynthesis via salvage pathway; UMP from uridine: step 1/1. This is Uridine kinase from Vibrio vulnificus (strain CMCP6).